Consider the following 204-residue polypeptide: Guanylate kinase (204 aa).

In terms of domain architecture, Guanylate kinase-like spans 5–184 (GLLIVLSGPS…AVQRIKDIIA (180 aa)). An ATP-binding site is contributed by 12–19 (GPSGVGKG).

The protein belongs to the guanylate kinase family.

The protein resides in the cytoplasm. It catalyses the reaction GMP + ATP = GDP + ADP. Its function is as follows. Essential for recycling GMP and indirectly, cGMP. This chain is Guanylate kinase, found in Enterococcus faecalis (strain ATCC 700802 / V583).